A 145-amino-acid chain; its full sequence is Basic phospholipase A2 Vb-2 (145 aa).

A signal peptide spans 1-19 (MNPAHLLVLLAVCVSLLGA). Positions 20-27 (ANIPPQPL) are excised as a propeptide. 7 disulfide bridges follow: cysteine 38–cysteine 97, cysteine 52–cysteine 144, cysteine 54–cysteine 70, cysteine 69–cysteine 125, cysteine 76–cysteine 118, cysteine 86–cysteine 111, and cysteine 104–cysteine 116. Positions 53, 55, and 57 each coordinate Ca(2+). Histidine 73 is a catalytic residue. Aspartate 74 contributes to the Ca(2+) binding site. Aspartate 119 is an active-site residue.

The cofactor is Ca(2+). As to expression, expressed by the venom gland.

It localises to the secreted. The enzyme catalyses a 1,2-diacyl-sn-glycero-3-phosphocholine + H2O = a 1-acyl-sn-glycero-3-phosphocholine + a fatty acid + H(+). Functionally, snake venom phospholipase A2 (PLA2) that has only a weak enzymatic activity. Inhibits neuromuscular transmission by blocking acetylcholine release from the nerve termini. PLA2 catalyzes the calcium-dependent hydrolysis of the 2-acyl groups in 3-sn-phosphoglycerides. The chain is Basic phospholipase A2 Vb-2 from Bungarus fasciatus (Banded krait).